We begin with the raw amino-acid sequence, 365 residues long: Peptide chain release factor 2 (365 aa).

Glutamine 252 carries the post-translational modification N5-methylglutamine.

The protein belongs to the prokaryotic/mitochondrial release factor family. Methylated by PrmC. Methylation increases the termination efficiency of RF2.

Its subcellular location is the cytoplasm. In terms of biological role, peptide chain release factor 2 directs the termination of translation in response to the peptide chain termination codons UGA and UAA. The polypeptide is Peptide chain release factor 2 (Yersinia enterocolitica serotype O:8 / biotype 1B (strain NCTC 13174 / 8081)).